Reading from the N-terminus, the 607-residue chain is MGKKRVMVPAKDVDLSSIKYEPEIVQAPHLTGFWFRFFVRLIEAPLIGPFLLTMLKKENKIDQLLRNTVFPEEPMFKPEYPPQEKEHSVVELDEDGRPEGRVESALNCLPHYDPAKLWENSSATFRYWKIRDYAYAYQSRKVTPSMVAESIISMIEENGIDKPPTPLLLSFDAAEVRKQAAASTQRFESGNPLSILDGIFIAIKDDIDCHPHPSTGGSTWMHEVRDVKKDAVCVSRLRSCGVIFIGKTNMHEFGMGTTGNNSNYGTARNPHAPDRYTGGSSSGPAAIVASGLCSAALGTDGGGSVRIPSSLCGVVGLKINYGRTSMEGSLCDSGTVEVIGPIASTVEDAMLVYAAMLGASPANRISMKPSTPCLPTLSSDDDTDALRSLRIGIYTPWFNNVHSTEVSDKCEDALNLLSKAHGCEVVEVVIPEIVEMRTAHLVSIGSECLSSLNPDIEDGKGVKLSYDTRTSLALFQSFTAADYVAAQCIRRRIMHYFMEIFKKVDVIVTPTTGMTAPRIPPSALKSGETDMPTTGYLMRFVVPANLLGLPAISVPVGYDKEGLPIGLQVIGRPWAEATILRVAAAVEKLCGESKRRPVTYYDVLGAN.

Catalysis depends on charge relay system residues lysine 204 and serine 280. 301–304 lines the substrate pocket; the sequence is GGGS. The active-site Acyl-ester intermediate is the serine 304.

This sequence belongs to the amidase family. Forms homodimers.

The protein localises to the endoplasmic reticulum membrane. It is found in the cell membrane. It carries out the reaction N-(9Z,12Z-octadecadienoyl)-ethanolamine + H2O = ethanolamine + (9Z,12Z)-octadecadienoate. Catalyzes the hydrolysis of bioactive endogenous fatty acid amides to their corresponding acids. The hydrolysis of endogenous amidated lipids terminates their participation as lipid mediators in various signaling systems. Converts a wide range of N-acylethanolamines (NAEs) to their corresponding free fatty acids and ethanolamine. This is Fatty acid amide hydrolase from Medicago truncatula (Barrel medic).